A 738-amino-acid chain; its full sequence is LPS-assembly protein LptD (738 aa).

The N-terminal stretch at 1–26 (MEHKRNNILLAGLFFLLLGLVSIARA) is a signal peptide.

The protein belongs to the LptD family. In terms of assembly, component of the lipopolysaccharide transport and assembly complex. Interacts with LptE and LptA.

Its subcellular location is the cell outer membrane. In terms of biological role, together with LptE, is involved in the assembly of lipopolysaccharide (LPS) at the surface of the outer membrane. This Nitrosococcus oceani (strain ATCC 19707 / BCRC 17464 / JCM 30415 / NCIMB 11848 / C-107) protein is LPS-assembly protein LptD.